The sequence spans 184 residues: ATP synthase subunit b, chloroplastic (184 aa).

A helical transmembrane segment spans residues 29–49 (INLINLILVLGILFYYGKGVL).

The protein belongs to the ATPase B chain family. F-type ATPases have 2 components, F(1) - the catalytic core - and F(0) - the membrane proton channel. F(1) has five subunits: alpha(3), beta(3), gamma(1), delta(1), epsilon(1). F(0) has four main subunits: a(1), b(1), b'(1) and c(10-14). The alpha and beta chains form an alternating ring which encloses part of the gamma chain. F(1) is attached to F(0) by a central stalk formed by the gamma and epsilon chains, while a peripheral stalk is formed by the delta, b and b' chains.

The protein resides in the plastid. Its subcellular location is the chloroplast thylakoid membrane. F(1)F(0) ATP synthase produces ATP from ADP in the presence of a proton or sodium gradient. F-type ATPases consist of two structural domains, F(1) containing the extramembraneous catalytic core and F(0) containing the membrane proton channel, linked together by a central stalk and a peripheral stalk. During catalysis, ATP synthesis in the catalytic domain of F(1) is coupled via a rotary mechanism of the central stalk subunits to proton translocation. Its function is as follows. Component of the F(0) channel, it forms part of the peripheral stalk, linking F(1) to F(0). The polypeptide is ATP synthase subunit b, chloroplastic (Adiantum capillus-veneris (Maidenhair fern)).